The chain runs to 204 residues: ATP-dependent Clp protease proteolytic subunit 1 (204 aa).

The active-site Nucleophile is the S97. The active site involves H122.

This sequence belongs to the peptidase S14 family. Fourteen ClpP subunits assemble into 2 heptameric rings which stack back to back to give a disk-like structure with a central cavity, resembling the structure of eukaryotic proteasomes.

The protein resides in the cytoplasm. The catalysed reaction is Hydrolysis of proteins to small peptides in the presence of ATP and magnesium. alpha-casein is the usual test substrate. In the absence of ATP, only oligopeptides shorter than five residues are hydrolyzed (such as succinyl-Leu-Tyr-|-NHMec, and Leu-Tyr-Leu-|-Tyr-Trp, in which cleavage of the -Tyr-|-Leu- and -Tyr-|-Trp bonds also occurs).. In terms of biological role, cleaves peptides in various proteins in a process that requires ATP hydrolysis. Has a chymotrypsin-like activity. Plays a major role in the degradation of misfolded proteins. This Trichormus variabilis (strain ATCC 29413 / PCC 7937) (Anabaena variabilis) protein is ATP-dependent Clp protease proteolytic subunit 1.